The following is a 619-amino-acid chain: Sodium-coupled monocarboxylate transporter 2 (619 aa).

Topologically, residues 1 to 9 (MRVKNFEAW) are extracellular. A helical membrane pass occupies residues 10 to 30 (DYVVFAGLFVISSGIGVFFAI). The Cytoplasmic segment spans residues 31–47 (KERKKTTSREFLVGGRQ). A helical transmembrane segment spans residues 48-68 (MSFGPVALSLTASFMSAVTVL). Topologically, residues 69–80 (GTPAEVYRFGAS) are extracellular. The helical transmembrane segment at 81–101 (FFLFLISYVFVVFFTSELFLP) threads the bilayer. Over 102-128 (VFYRSGITSTYEYLQLRFNKPVRYAAT) the chain is Cytoplasmic. Residues 129–149 (IIYIVQTILYTGVVVYAPALA) traverse the membrane as a helical segment. The Extracellular portion of the chain corresponds to 150-157 (LNQVTGFN). A helical membrane pass occupies residues 158–178 (LWASVFATGIVCTFYCSLGGL). The Cytoplasmic portion of the chain corresponds to 179 to 180 (KA). Residues 181–201 (VVWTDAFQMVVMIVGFLTVLI) form a helical membrane-spanning segment. At 202-235 (QGSNHVGGFNNVLEKAGNGSRLHIVDFDVDPLRR) the chain is on the extracellular side. Asn-219 carries an N-linked (GlcNAc...) asparagine glycan. A helical transmembrane segment spans residues 236–256 (HTFWTITIGGTFTWLGVYGVN). The Cytoplasmic segment spans residues 257–275 (QSTIQRCISCKTEKHAKLA). A helical transmembrane segment spans residues 276 to 296 (LYFNLLGLWIIVACAVFSGLI). At 297–321 (MYSHFKDCDPWTSGVISAPDQLMPY) the chain is on the extracellular side. A helical transmembrane segment spans residues 322–342 (FVMEIFATMPGLPGLFVACAF). Topologically, residues 343-385 (SGTLSTVAASINALATVTFEDFVKSCFPHLSDKLSTWISKGLC) are cytoplasmic. The chain crosses the membrane as a helical span at residues 386 to 406 (ILFGIMCTSMAVVASLMGSVV). Residues 407-411 (QAALS) are Extracellular-facing. A helical transmembrane segment spans residues 412–432 (IHGMCGGPMLGLFTLGLVFPF). At 433-437 (VNWKG) the chain is on the cytoplasmic side. A helical transmembrane segment spans residues 438-458 (ALGGLLTGITLSFWVAIGSFI). Over 459 to 504 (YPAPESKTLPLPLSTEHCVELNITTTVAPQISSRPVLADTWYSLSY) the chain is Extracellular. The N-linked (GlcNAc...) asparagine glycan is linked to Asn-480. The helical transmembrane segment at 505 to 525 (LYFSAVGCLGCIAAGIIISFL) threads the bilayer. Residues 526–619 (TGKQRGKDID…NSVPEKTTYF (94 aa)) are Cytoplasmic-facing.

The protein belongs to the sodium:solute symporter (SSF) (TC 2.A.21) family. As to expression, expressed in the cortical region of the kidney corresponding to the proximal tubule. Expressed in Mueller cells of the inner retina (at protein level). Isoform 1 is expressed in the retina, kidney, small intestine and skeletal muscle. Isoform 2 is not detected in the kidney, small intestine and skeletal muscle. In the kidney, expressed predominantly in tubular epithelial cells of the cortical region and in the convoluted portions of the proximal tubule (pars convoluta). In the small intestine, its expression is highest in the proximal part and gradually decreased towards the distal end. Expressed in the neural retina. Not detected in the caecum and colon.

It is found in the apical cell membrane. The enzyme catalyses (S)-lactate(out) + Na(+)(out) = (S)-lactate(in) + Na(+)(in). The catalysed reaction is nicotinate(out) + Na(+)(out) = nicotinate(in) + Na(+)(in). It carries out the reaction pyruvate(out) + Na(+)(out) = pyruvate(in) + Na(+)(in). It catalyses the reaction propanoate(out) + Na(+)(out) = propanoate(in) + Na(+)(in). The enzyme catalyses butanoate(out) + Na(+)(out) = butanoate(in) + Na(+)(in). The catalysed reaction is acetoacetate(out) + Na(+)(out) = acetoacetate(in) + Na(+)(in). In terms of biological role, acts as an electroneutral and low-affinity sodium (Na(+))-dependent sodium-coupled solute transporter. Catalyzes the transport across the plasma membrane of many monocarboxylates such as lactate, pyruvate, nicotinate, propionate, butyrate and beta-D-hydroxybutyrate. May be responsible for the first step of reabsorption of monocarboxylates from the lumen of the proximal tubule of the kidney and the small intestine. May play also a role in monocarboxylates transport in the retina. Mediates electroneutral uptake of lactate, with a stoichiometry of 2 Na(+) for each lactate. The polypeptide is Sodium-coupled monocarboxylate transporter 2 (Slc5a12) (Mus musculus (Mouse)).